Consider the following 217-residue polypeptide: Regulator of G-protein signaling 19 (217 aa).

The segment at 1–29 (MPTPHEAEKQITGPEEADRPPSMSSHDTA) is disordered. Phosphoserine is present on residues Ser-24 and Ser-97. An RGS domain is found at 90-206 (SFDKLMHSPA…LSSPTYRALL (117 aa)). Phosphoserine; by MAPK1 and MAPK3 is present on Ser-151. The interaction with GIPC stretch occupies residues 207-217 (LQGPSQSSSEA).

In terms of assembly, interacts with GIPC PDZ domain. Interacts with GNAO1. Post-translationally, fatty acylated. Heavily palmitoylated in the cysteine string motif. Phosphorylated, mainly on serine residues. As to expression, highest expression in lung. Placenta, liver and heart also express high levels of GAIP.

Its subcellular location is the membrane. Inhibits signal transduction by increasing the GTPase activity of G protein alpha subunits thereby driving them into their inactive GDP-bound form. Binds to G-alpha subfamily 1 members, with the order G(i)a3 &gt; G(i)a1 &gt; G(o)a &gt;&gt; G(z)a/G(i)a2. Activity on G(z)-alpha is inhibited by phosphorylation and palmitoylation of the G-protein. This is Regulator of G-protein signaling 19 (RGS19) from Homo sapiens (Human).